Here is a 389-residue protein sequence, read N- to C-terminus: MADGSKVFKKTSPDGKITVYLAKRDYVDHVEFVEPVDGMIVIDPEYQKEKKVFVMMTCAFRYGRDDMELIGLSFRKDIYVQSCQVHPPLPGEKKALTPLQEKLKAKLGGNSFPFSFNMATNLPCSVTLQPGPEDSGKACGVDFEVKGFWGDDVEEKNSKKNVARLIIRKVQYAPETSGAAPHAEITKQFMMSDKPLQLEASLNKEIHYHGEPIIVNVKINNSTNKIVKKIKITVEQITDVVLYSLDKYTKVVCCEEMNDTVAANSAFTKAYQVTPLLANNREKRGLALDGKLKHGDTNLASSTTLRPGMDKEVMGILVSYKIRVNLMASRGGILGDLISSDVSVELPLILMHPKPAEGTTSAEDVVIEEFARQKLQGEQDDEEDKEEAS.

It belongs to the arrestin family. In terms of tissue distribution, retina and pineal gland.

Its function is as follows. May play a role in an as yet undefined retina-specific signal transduction. Could bind to photoactivated-phosphorylated red/green opsins. In Aquarana catesbeiana (American bullfrog), this protein is Arrestin-C (arr3).